Reading from the N-terminus, the 267-residue chain is Protein I267L (267 aa).

This sequence belongs to the asfivirus I267L family.

The polypeptide is Protein I267L (African swine fever virus (isolate Warthog/Namibia/Wart80/1980) (ASFV)).